The sequence spans 591 residues: Homeobox domain-containing transcription factor HOB1 (591 aa).

Positions M1–E15 are enriched in basic and acidic residues. 2 disordered regions span residues M1–G37 and I148–A168. The segment at residues I176–E223 is a DNA-binding region (homeobox). Disordered stretches follow at residues D420–S463 and D543–E563. The span at Q427–Q441 shows a compositional bias: acidic residues. Residues D543–A560 are compositionally biased toward basic and acidic residues.

It localises to the nucleus. Its function is as follows. General stress-responsive transcription factor that governs multiple stress responses and adaptations. Plays a key role in virulence. Mediates the expression of LAC1, which is the major laccase involved in melanin synthesis. Positively regulates BZP4 induction under conditions of nutrient starvation and basal expression levels of MBS1 and USV101, 3 major transcription factors that independently contribute to melanin production. Also acts as a key regulator of ergosterol gene expression. This Cryptococcus neoformans var. grubii serotype A (strain H99 / ATCC 208821 / CBS 10515 / FGSC 9487) (Filobasidiella neoformans var. grubii) protein is Homeobox domain-containing transcription factor HOB1.